The primary structure comprises 179 residues: CASP-like protein 5A2 (179 aa).

Residues 1–54 lie on the Cytoplasmic side of the membrane; it reads MEATSHPAVHPVAVPPQFQGAGPPAIQMKDFPGSPGTAGGLALRFTQFGFSLIS. 2 helical membrane passes run 55-75 and 76-96; these read LCIM…FLVA and TMVF…YALL. Topologically, residues 97–114 are cytoplasmic; sequence TQRSFRNPLIVSLFVVGD. A helical membrane pass occupies residues 115 to 135; sequence WVTSTMTFAGACAAAGITVLI. Topologically, residues 136–154 are extracellular; it reads DNDLEQCGPNHCGRFEAAA. A helical transmembrane segment spans residues 155 to 175; that stretch reads AMAFMSWTATTLSFCLSFWLL. At 176-179 the chain is on the cytoplasmic side; that stretch reads ASCR.

This sequence belongs to the Casparian strip membrane proteins (CASP) family. Homodimer and heterodimers.

The protein resides in the cell membrane. This is CASP-like protein 5A2 from Physcomitrium patens (Spreading-leaved earth moss).